The chain runs to 874 residues: MKTSELRQKFLKFFETKGHTVVRSSSLVPHDDPTLLFTNAGMNQFKDVFLGFDKRPYSRATTAQKCVRAGGKHNDLENVGYTARHHTFFEMMGNFSFGDYFKRDAIHFAWEFLTSPEWLNIPKDKLLATVYAEDDEAYNIWLNEIGMPSERIVRIGDNKGAKYASDNFWQMGDTGPCGPCSEIFYDHGKEIWGGIPGSPEEDGDRWIEIWNCVFMQFNRDEQGNMNPLPKPSVDTGMGLERMAAVMQHVHSNYEIDLFQDLLKAVARETGAPFSMEEPSLKVIADHIRSCSFLIADGVLPSNEGRGYVLRRIIRRAVRHGYKLGQSKPFFHKLVADLVQEMGGAYPELKEKQAQIEEALKNEESRFAQTLETGMALLENALAKGGKTLGGEIIFKLYDTYGFPYDLTADICRERNIEPDEAGFEREMEAQRARARAAQSFKANAQLPYDGQDTEFKGYSERQTESKVLALYKDGEQVVELNEGDSGAVVIDFTPFYAESGGQVGDVGYIFAGENRFEVRDTQKIKAAVFGQFGVQTSGRLKVGDSITAKVDDEIRNANMRNHSATHLMHKALRDVLGGHVEQKGSLVTAESTRFDISHPQAVTAEEIAEVERRVNEAILANVAVNAAIMSMEDAQKTDAMMLFGEKYGDEVRVLQMGGFSTELCGGTHVSRTGDIGLFKIISEGGIAAGVRRIEAITGLNALKWAQEQERLVKDIIAETKAQTEKDVLAKIQAGAAHAKALEKELARAKAELAVHAGAKLLDDAKDLGAAKLVAAQIEADAAALRETVTDLTGKSDNAVILLAAVNEGKVSLCAGVSKALTGKVKAGDLVKFAAEQVGGKGGGRPDLAQAGGTDADKLPEMLASAEGWLCQKLS.

Residues His-562, His-566, Cys-664, and His-668 each coordinate Zn(2+).

Belongs to the class-II aminoacyl-tRNA synthetase family. Requires Zn(2+) as cofactor.

Its subcellular location is the cytoplasm. The enzyme catalyses tRNA(Ala) + L-alanine + ATP = L-alanyl-tRNA(Ala) + AMP + diphosphate. In terms of biological role, catalyzes the attachment of alanine to tRNA(Ala) in a two-step reaction: alanine is first activated by ATP to form Ala-AMP and then transferred to the acceptor end of tRNA(Ala). Also edits incorrectly charged Ser-tRNA(Ala) and Gly-tRNA(Ala) via its editing domain. The protein is Alanine--tRNA ligase of Neisseria gonorrhoeae (strain ATCC 700825 / FA 1090).